The following is a 388-amino-acid chain: Staphopain A (388 aa).

An N-terminal signal peptide occupies residues M1–A25. The propeptide occupies E26–T214. Residues C238, H334, and N355 contribute to the active site.

It belongs to the peptidase C47 family. As to quaternary structure, in the cytoplasm, prematurely activated/folded ScpA forms a stable non-covalent complex with ScpB. Cleavage leads to the activation of ScpA probably by an auto-catalytic manner.

It localises to the secreted. The catalysed reaction is Broad endopeptidase action on proteins including elastin, but rather limited hydrolysis of small-molecule substrates. Assays are conveniently made with hemoglobin, casein or Z-Phe-Arg-NHMec as substrate.. Its activity is regulated as follows. Prematurely activated/folded staphopain A is inhibited by staphostatin A (ScpB), which is probably required to protect staphylococcal cytoplasmic proteins from degradation by ScpA. Also inactivated by heavy metal ions such as Hg(2+) or Ag(+), iodoacetamide, E-64 and human plasma. Its function is as follows. Cysteine protease that plays an important role in the inhibition of host innate immune response. Cleaves host elastins found in connective tissues, pulmonary surfactant protein A in the lungs, and the chemokine receptor CXCR2 on leukocytes. Proteolytic cleavage of surfactant protein A impairs bacterial phagocytosis by neutrophils while CXCR2 degradation blocks neutrophil activation and chemotaxis. Additionally, promotes vascular leakage by activating the plasma kallikerin/kinin system, resulting in hypotension. The chain is Staphopain A (sspP) from Staphylococcus aureus.